Consider the following 122-residue polypeptide: Large ribosomal subunit protein uL14c (122 aa).

It belongs to the universal ribosomal protein uL14 family. In terms of assembly, part of the 50S ribosomal subunit.

Its subcellular location is the plastid. The protein resides in the chloroplast. Functionally, binds to 23S rRNA. This is Large ribosomal subunit protein uL14c from Piper cenocladum (Ant piper).